The following is a 122-amino-acid chain: Large ribosomal subunit protein uL22 (122 aa).

Residues 102–122 form a disordered region; sequence VAEGKEMKSSKSHKKNQAEGK.

This sequence belongs to the universal ribosomal protein uL22 family. In terms of assembly, part of the 50S ribosomal subunit.

Functionally, this protein binds specifically to 23S rRNA; its binding is stimulated by other ribosomal proteins, e.g. L4, L17, and L20. It is important during the early stages of 50S assembly. It makes multiple contacts with different domains of the 23S rRNA in the assembled 50S subunit and ribosome. In terms of biological role, the globular domain of the protein is located near the polypeptide exit tunnel on the outside of the subunit, while an extended beta-hairpin is found that lines the wall of the exit tunnel in the center of the 70S ribosome. In Helicobacter pylori (strain G27), this protein is Large ribosomal subunit protein uL22.